Reading from the N-terminus, the 71-residue chain is Small ribosomal subunit protein bS21 (71 aa).

Residues 48 to 71 (ENATLAKRHAKRNARENARNTRLY) are disordered. The segment covering 60 to 71 (NARENARNTRLY) has biased composition (basic and acidic residues).

This sequence belongs to the bacterial ribosomal protein bS21 family.

The chain is Small ribosomal subunit protein bS21 from Haemophilus influenzae (strain 86-028NP).